A 147-amino-acid chain; its full sequence is Hemoglobin subunit delta (147 aa).

The 145-residue stretch at 3-147 (HLTPEEKAAV…VATALAHKYH (145 aa)) folds into the Globin domain. Residues His64 and His93 each contribute to the heme b site.

Belongs to the globin family. Heterotetramer of two delta chains and two alpha chains. Red blood cells.

The sequence is that of Hemoglobin subunit delta (HBD) from Ateles geoffroyi (Black-handed spider monkey).